Reading from the N-terminus, the 107-residue chain is Large ribosomal subunit protein uL24 (107 aa).

The protein belongs to the universal ribosomal protein uL24 family. Part of the 50S ribosomal subunit.

One of two assembly initiator proteins, it binds directly to the 5'-end of the 23S rRNA, where it nucleates assembly of the 50S subunit. In terms of biological role, one of the proteins that surrounds the polypeptide exit tunnel on the outside of the subunit. The sequence is that of Large ribosomal subunit protein uL24 from Gluconacetobacter diazotrophicus (strain ATCC 49037 / DSM 5601 / CCUG 37298 / CIP 103539 / LMG 7603 / PAl5).